The primary structure comprises 79 residues: Small ribosomal subunit protein uS11 (79 aa).

Position 14 is a phosphoserine (Ser-14). Glycyl lysine isopeptide (Lys-Gly) (interchain with G-Cter in SUMO2) cross-links involve residues Lys-59 and Lys-61.

Belongs to the universal ribosomal protein uS11 family. Component of the small ribosomal subunit. Part of the small subunit (SSU) processome, composed of more than 70 proteins and the RNA chaperone small nucleolar RNA (snoRNA) U3.

The protein localises to the cytoplasm. Its subcellular location is the nucleus. It localises to the nucleolus. Functionally, component of the small ribosomal subunit. The ribosome is a large ribonucleoprotein complex responsible for the synthesis of proteins in the cell. Part of the small subunit (SSU) processome, first precursor of the small eukaryotic ribosomal subunit. During the assembly of the SSU processome in the nucleolus, many ribosome biogenesis factors, an RNA chaperone and ribosomal proteins associate with the nascent pre-rRNA and work in concert to generate RNA folding, modifications, rearrangements and cleavage as well as targeted degradation of pre-ribosomal RNA by the RNA exosome. The sequence is that of Small ribosomal subunit protein uS11 (RPS14) from Sus scrofa (Pig).